Here is a 378-residue protein sequence, read N- to C-terminus: MKNSIIELARELIRRPSISPDDQGCQQIIAERLERLGFQIEWLPFNDTLNLWAKHGSGSPVIAFAGHTDVVPVGDTTQWQYPPFSAQLVDNVLYGRGAADMKGSLAAMVVAAEHYVKANPEHSGTVALLITSDEEAAAKDGTVRVVETLMARGEPIDYCIVGEPSSAQQFGDIVKNGRRGSITANLYIQGIQGHVAYPHLAQNPVHKALGFLTELTTYQWDNGNDFFPPTSLQIANIQAGTGSNNVIPGELYVQFNLRYCTEVTDDIIKKKVAEMLAKHQLNYRIEWHLSGKPFLTAKGKLVDTLLDVVEKITQNRPHLDTGGGTSDARFIALMGAEVVEFGPLNKTIHKVDECVNVDDLAKCGEVYQHVLCNMLERV.

His67 serves as a coordination point for Zn(2+). Asp69 is an active-site residue. Zn(2+) is bound at residue Asp100. Glu134 (proton acceptor) is an active-site residue. Zn(2+)-binding residues include Glu135, Glu163, and His349.

The protein belongs to the peptidase M20A family. DapE subfamily. Homodimer. Requires Zn(2+) as cofactor. It depends on Co(2+) as a cofactor.

It catalyses the reaction N-succinyl-(2S,6S)-2,6-diaminopimelate + H2O = (2S,6S)-2,6-diaminopimelate + succinate. It functions in the pathway amino-acid biosynthesis; L-lysine biosynthesis via DAP pathway; LL-2,6-diaminopimelate from (S)-tetrahydrodipicolinate (succinylase route): step 3/3. Its function is as follows. Catalyzes the hydrolysis of N-succinyl-L,L-diaminopimelic acid (SDAP), forming succinate and LL-2,6-diaminopimelate (DAP), an intermediate involved in the bacterial biosynthesis of lysine and meso-diaminopimelic acid, an essential component of bacterial cell walls. This is Succinyl-diaminopimelate desuccinylase from Pasteurella multocida (strain Pm70).